A 1317-amino-acid chain; its full sequence is DNA-directed RNA polymerase subunit beta' (1317 aa).

Positions 60, 62, 75, and 78 each coordinate Zn(2+). The tract at residues 183–209 (ELEDEGAKSDVKRKVRDGGEREMRQLR) is disordered. Mg(2+) contacts are provided by Asp535, Asp537, and Asp539. Residues Cys890, Cys967, Cys974, and Cys977 each coordinate Zn(2+).

Belongs to the RNA polymerase beta' chain family. The RNAP catalytic core consists of 2 alpha, 1 beta, 1 beta' and 1 omega subunit. When a sigma factor is associated with the core the holoenzyme is formed, which can initiate transcription. Mg(2+) is required as a cofactor. It depends on Zn(2+) as a cofactor.

It carries out the reaction RNA(n) + a ribonucleoside 5'-triphosphate = RNA(n+1) + diphosphate. In terms of biological role, DNA-dependent RNA polymerase catalyzes the transcription of DNA into RNA using the four ribonucleoside triphosphates as substrates. The sequence is that of DNA-directed RNA polymerase subunit beta' from Mycolicibacterium vanbaalenii (strain DSM 7251 / JCM 13017 / BCRC 16820 / KCTC 9966 / NRRL B-24157 / PYR-1) (Mycobacterium vanbaalenii).